The primary structure comprises 553 residues: Putative transport protein KPK_0013 (553 aa).

The next 5 membrane-spanning stretches (helical) occupy residues Ile4–Val24, Gly28–Asp48, Phe65–Ser85, Leu95–Phe115, and Met158–Val178. RCK C-terminal domains follow at residues Arg192–Gln276 and Ala279–Asn361. A run of 6 helical transmembrane segments spans residues Met371–Ile391, Ala403–Phe425, Leu437–Thr457, Leu464–Leu484, Tyr493–Ala513, and Pro532–Leu552.

The protein belongs to the AAE transporter (TC 2.A.81) family. YidE subfamily.

It is found in the cell membrane. The protein is Putative transport protein KPK_0013 of Klebsiella pneumoniae (strain 342).